The sequence spans 233 residues: Ycf53-like protein (233 aa).

Belongs to the ycf53 family.

The polypeptide is Ycf53-like protein (Synechocystis sp. (strain ATCC 27184 / PCC 6803 / Kazusa)).